We begin with the raw amino-acid sequence, 76 residues long: FMRFamide-related neuropeptides (76 aa).

An N-terminal signal peptide occupies residues 1–27 (MCVQTRMLVAVAVVLVVLAVLSDPVSA). The residue at position 39 (Phe39) is a Phenylalanine amide.

This sequence belongs to the FARP (FMRFamide related peptide) family. Olfactory lobe and accessory lobe, olfactory globular tract, olfactory lobe cells (at protein level). Widely distributed throughout nervous system.

The protein resides in the secreted. Functionally, GYRKPPFNGSIF-amide may be involved in olfaction and contraction of hindgut. The chain is FMRFamide-related neuropeptides from Procambarus clarkii (Red swamp crayfish).